The following is a 137-amino-acid chain: Small ribosomal subunit protein uS9 (137 aa).

The disordered stretch occupies residues 114-137; sequence DSRMKERKKPGLRGARRGVQFSKR. Positions 118–137 are enriched in basic residues; it reads KERKKPGLRGARRGVQFSKR.

This sequence belongs to the universal ribosomal protein uS9 family.

The chain is Small ribosomal subunit protein uS9 from Rhodopirellula baltica (strain DSM 10527 / NCIMB 13988 / SH1).